We begin with the raw amino-acid sequence, 222 residues long: Ubiquitin-conjugating enzyme E2 S (222 aa).

Methionine 1 is subject to N-acetylmethionine. The UBC core domain maps to 11–157 (HIIRLVYKEV…ARLLTEIHGG (147 aa)). The active-site Glycyl thioester intermediate is the cysteine 95. The interval 156 to 222 (GGAGGPSGRA…TDKKRALRRL (67 aa)) is disordered. Position 173 is a phosphoserine (serine 173). The span at 208–222 (AAKKKTDKKRALRRL) shows a compositional bias: basic residues.

This sequence belongs to the ubiquitin-conjugating enzyme family. Component of the APC/C complex, composed of at least 14 distinct subunits that assemble into a complex of at least 19 chains with a combined molecular mass of around 1.2 MDa. Within this complex, directly interacts with ANAPC2 and ANAPC4. Interacts with CDC20, FZR1/CDH1 and VHL. Autoubiquitinated by the APC/C complex during G1, leading to its degradation by the proteasome.

The catalysed reaction is S-ubiquitinyl-[E1 ubiquitin-activating enzyme]-L-cysteine + [E2 ubiquitin-conjugating enzyme]-L-cysteine = [E1 ubiquitin-activating enzyme]-L-cysteine + S-ubiquitinyl-[E2 ubiquitin-conjugating enzyme]-L-cysteine.. It participates in protein modification; protein ubiquitination. Its function is as follows. Accepts ubiquitin from the E1 complex and catalyzes its covalent attachment to other proteins. Catalyzes 'Lys-11'-linked polyubiquitination. Acts as an essential factor of the anaphase promoting complex/cyclosome (APC/C), a cell cycle-regulated ubiquitin ligase that controls progression through mitosis. Acts by specifically elongating 'Lys-11'-linked polyubiquitin chains initiated by the E2 enzyme UBE2C/UBCH10 on APC/C substrates, enhancing the degradation of APC/C substrates by the proteasome and promoting mitotic exit. Also acts by elongating ubiquitin chains initiated by the E2 enzyme UBE2D1/UBCH5 in vitro; it is however unclear whether UBE2D1/UBCH5 acts as an E2 enzyme for the APC/C in vivo. Also involved in ubiquitination and subsequent degradation of VHL, resulting in an accumulation of HIF1A. In vitro able to promote polyubiquitination using all 7 ubiquitin Lys residues, except 'Lys-48'-linked polyubiquitination. This chain is Ubiquitin-conjugating enzyme E2 S (UBE2S), found in Homo sapiens (Human).